A 394-amino-acid chain; its full sequence is Protein TsgA homolog (394 aa).

12 helical membrane-spanning segments follow: residues 11 to 31 (WISY…GMVM), 51 to 71 (FLNA…EIIP), 76 to 96 (LMFG…GKSL), 101 to 121 (LCMF…TFLI), 134 to 154 (LLFT…VAAM), 162 to 182 (WYWV…LTLF), 206 to 226 (IGVL…LGFI), 251 to 271 (FWTS…FFDL), 274 to 294 (IVTI…STDN), 302 to 322 (IMAL…LGSL), 334 to 354 (FILT…GPIV), and 363 to 383 (LTTA…LGFV).

Belongs to the major facilitator superfamily. TsgA family.

The protein resides in the cell inner membrane. The sequence is that of Protein TsgA homolog from Serratia proteamaculans (strain 568).